Reading from the N-terminus, the 365-residue chain is 3-isopropylmalate dehydrogenase (365 aa).

78–89 (GPKWGTGKVRPE) is a binding site for NAD(+). Arg-96, Arg-106, Arg-135, and Asp-224 together coordinate substrate. Mg(2+) is bound by residues Asp-224, Asp-249, and Asp-253. 289–301 (GSAPDISGKGIVN) is a binding site for NAD(+).

The protein belongs to the isocitrate and isopropylmalate dehydrogenases family. In terms of assembly, homodimer. It depends on Mg(2+) as a cofactor. Requires Mn(2+) as cofactor.

It localises to the cytoplasm. It carries out the reaction (2R,3S)-3-isopropylmalate + NAD(+) = 4-methyl-2-oxopentanoate + CO2 + NADH. It functions in the pathway amino-acid biosynthesis; L-leucine biosynthesis; L-leucine from 3-methyl-2-oxobutanoate: step 3/4. In terms of biological role, catalyzes the oxidation of 3-carboxy-2-hydroxy-4-methylpentanoate (3-isopropylmalate) to 3-carboxy-4-methyl-2-oxopentanoate. The product decarboxylates to 4-methyl-2 oxopentanoate. This is 3-isopropylmalate dehydrogenase (LEUC) from Zymoseptoria tritici (Speckled leaf blotch fungus).